A 110-amino-acid polypeptide reads, in one-letter code: Cuticle protein 13 (110 aa).

This is Cuticle protein 13 from Limulus polyphemus (Atlantic horseshoe crab).